The chain runs to 105 residues: Large ribosomal subunit protein bL21 (105 aa).

The protein belongs to the bacterial ribosomal protein bL21 family. As to quaternary structure, part of the 50S ribosomal subunit. Contacts protein L20.

Its function is as follows. This protein binds to 23S rRNA in the presence of protein L20. This chain is Large ribosomal subunit protein bL21, found in Phocaeicola vulgatus (strain ATCC 8482 / DSM 1447 / JCM 5826 / CCUG 4940 / NBRC 14291 / NCTC 11154) (Bacteroides vulgatus).